The primary structure comprises 240 residues: Uridylate kinase (240 aa).

14–17 (KLSG) serves as a coordination point for ATP. Gly56 serves as a coordination point for UMP. Gly57 and Arg61 together coordinate ATP. UMP-binding positions include Asp76 and 137 to 144 (TGNPFFTT). ATP-binding residues include Thr164, Tyr170, and Asp173.

This sequence belongs to the UMP kinase family. In terms of assembly, homohexamer.

The protein localises to the cytoplasm. The catalysed reaction is UMP + ATP = UDP + ADP. It participates in pyrimidine metabolism; CTP biosynthesis via de novo pathway; UDP from UMP (UMPK route): step 1/1. With respect to regulation, inhibited by UTP. In terms of biological role, catalyzes the reversible phosphorylation of UMP to UDP. In Albidiferax ferrireducens (strain ATCC BAA-621 / DSM 15236 / T118) (Rhodoferax ferrireducens), this protein is Uridylate kinase.